Here is a 500-residue protein sequence, read N- to C-terminus: Bifunctional protein GlmU (500 aa).

The interval 1–242 is pyrophosphorylase; that stretch reads MPVQTAVVVL…SAKVAGANDR (242 aa). Residues 10–13, K24, Q81, and 86–87 each bind UDP-N-acetyl-alpha-D-glucosamine; these read LAAG and GT. Residue D112 participates in Mg(2+) binding. The UDP-N-acetyl-alpha-D-glucosamine site is built by G151, E167, N182, and N240. Position 240 (N240) interacts with Mg(2+). The interval 243-263 is linker; sequence VQLSRLAAELNRRTVENWMRA. Residues 264–500 form an N-acetyltransferase region; that stretch reads GVTVVDPSTT…KQDLKDGIEQ (237 aa). The UDP-N-acetyl-alpha-D-glucosamine site is built by R345 and K363. H375 (proton acceptor) is an active-site residue. UDP-N-acetyl-alpha-D-glucosamine-binding residues include Y378 and N389. Acetyl-CoA contacts are provided by residues A392, 398–399, S417, and A435; that span reads NY. The interval 459–500 is disordered; that stretch reads DGWVQRNRPGTPAAEAASAAGPHHSSDLHETEKQDLKDGIEQ. Basic and acidic residues predominate over residues 482-500; sequence HSSDLHETEKQDLKDGIEQ.

It in the N-terminal section; belongs to the N-acetylglucosamine-1-phosphate uridyltransferase family. This sequence in the C-terminal section; belongs to the transferase hexapeptide repeat family. In terms of assembly, homotrimer. The cofactor is Mg(2+).

Its subcellular location is the cytoplasm. The catalysed reaction is alpha-D-glucosamine 1-phosphate + acetyl-CoA = N-acetyl-alpha-D-glucosamine 1-phosphate + CoA + H(+). It catalyses the reaction N-acetyl-alpha-D-glucosamine 1-phosphate + UTP + H(+) = UDP-N-acetyl-alpha-D-glucosamine + diphosphate. It functions in the pathway nucleotide-sugar biosynthesis; UDP-N-acetyl-alpha-D-glucosamine biosynthesis; N-acetyl-alpha-D-glucosamine 1-phosphate from alpha-D-glucosamine 6-phosphate (route II): step 2/2. Its pathway is nucleotide-sugar biosynthesis; UDP-N-acetyl-alpha-D-glucosamine biosynthesis; UDP-N-acetyl-alpha-D-glucosamine from N-acetyl-alpha-D-glucosamine 1-phosphate: step 1/1. The protein operates within bacterial outer membrane biogenesis; LPS lipid A biosynthesis. Its function is as follows. Catalyzes the last two sequential reactions in the de novo biosynthetic pathway for UDP-N-acetylglucosamine (UDP-GlcNAc). The C-terminal domain catalyzes the transfer of acetyl group from acetyl coenzyme A to glucosamine-1-phosphate (GlcN-1-P) to produce N-acetylglucosamine-1-phosphate (GlcNAc-1-P), which is converted into UDP-GlcNAc by the transfer of uridine 5-monophosphate (from uridine 5-triphosphate), a reaction catalyzed by the N-terminal domain. The sequence is that of Bifunctional protein GlmU from Rhodococcus opacus (strain B4).